The primary structure comprises 341 residues: Delta(1)-pyrroline-2-carboxylate/Delta(1)-piperideine-2-carboxylate reductase (341 aa).

Ser-52 (charge relay system) is an active-site residue. His-53 serves as the catalytic Proton donor. Arg-57 is a substrate binding site. 125 to 129 provides a ligand contact to NADP(+); it reads HFAAL. Position 165 (Thr-165) interacts with substrate. Position 183–185 (183–185) interacts with NADP(+); it reads DMA. Substrate is bound at residue 191 to 192; that stretch reads HG. Asp-193 (charge relay system) is an active-site residue. NADP(+)-binding positions include 235–236 and 308–314; these read HK and RMPGERR.

This sequence belongs to the LDH2/MDH2 oxidoreductase family. As to quaternary structure, homodimer.

It carries out the reaction L-pipecolate + NADP(+) = Delta(1)-piperideine-2-carboxylate + NADPH + H(+). The enzyme catalyses L-proline + NADP(+) = 1-pyrroline-2-carboxylate + NADPH + H(+). It catalyses the reaction N-methyl-L-alanine + NADP(+) + H2O = methylamine + pyruvate + NADPH + H(+). Is inhibited by the substrate analog pyrrole-2-carboxylate, but not by N-formylphenylalanine. Its function is as follows. Catalyzes the reduction of both Delta(1)-pyrroline-2-carboxylate (Pyr2C) and Delta(1)-piperideine-2-carboxylate (Pip2C) to L-proline and L-pipecolate, respectively, using NADPH as the electron donor. Can use NADH instead of NADPH, although with much less efficiency. Plays an essential role in the catabolism of D-proline and D-lysine, which allows P.putida to grow on each of these amino-acids as a sole carbon source; D-lysine appears to be catabolized only through the pipecolate pathway. Can also catalyze the reverse oxidation reactions, albeit at a much lower rate. To a lesser extent, is able to catalyze in vitro the NADPH-dependent formation of N-alkyl-L-amino acids from the corresponding alpha-oxo acids and alkylamines, e.g. the formation of N-methylalanine from pyruvate and N-methylamine; cannot use ammonia as substrate for these reductive amination reactions. Shows neither malate dehydrogenase nor lactate dehydrogenase activity. The polypeptide is Delta(1)-pyrroline-2-carboxylate/Delta(1)-piperideine-2-carboxylate reductase (Pseudomonas putida (Arthrobacter siderocapsulatus)).